The sequence spans 340 residues: MRISIVGITGYSGMELLRILLQHPQVEVVSLHASQDREAPVSELYPHLKGICDLKIEAFDSQEIMRRADLVFFATSSGVAKDLSKDFVEVGFPVIDLSGDHRLPGNIYKKWYQKEPAEDHVQKKFIYGLSEFADVRGERFIANPGCYATATELALIPLLQAQAIELDSIIVDAKSGLTGAGKNPAASSHFVHVHDNYVTYKLNQHQHIPEIVQQLQRFDESLQQIQFSTSLIPLNRGIVATVYSKLKEPLTQEELTAIYQECYQEKPFVRIQATLPSLHQVVGTNYTDIGFDYNHVTNILTVVAVLDNLIKGAAGQAVQNMNLMLGFPETDGLLSQPSYV.

The active site involves Cys-146.

This sequence belongs to the NAGSA dehydrogenase family. Type 1 subfamily.

Its subcellular location is the cytoplasm. It catalyses the reaction N-acetyl-L-glutamate 5-semialdehyde + phosphate + NADP(+) = N-acetyl-L-glutamyl 5-phosphate + NADPH + H(+). It participates in amino-acid biosynthesis; L-arginine biosynthesis; N(2)-acetyl-L-ornithine from L-glutamate: step 3/4. Its function is as follows. Catalyzes the NADPH-dependent reduction of N-acetyl-5-glutamyl phosphate to yield N-acetyl-L-glutamate 5-semialdehyde. The sequence is that of N-acetyl-gamma-glutamyl-phosphate reductase from Streptococcus gordonii (strain Challis / ATCC 35105 / BCRC 15272 / CH1 / DL1 / V288).